A 460-amino-acid chain; its full sequence is tRNA modification GTPase MnmE (460 aa).

3 residues coordinate (6S)-5-formyl-5,6,7,8-tetrahydrofolate: Arg-22, Glu-87, and Arg-126. One can recognise a TrmE-type G domain in the interval 222-381 (GLKTAIIGKP…LENTIYNLVF (160 aa)). Asn-232 is a K(+) binding site. GTP contacts are provided by residues 232–237 (NVGKSS), 251–257 (TDIPGTT), and 276–279 (DTAG). Ser-236 is a binding site for Mg(2+). Residues Thr-251, Ile-253, and Thr-256 each coordinate K(+). Thr-257 is a binding site for Mg(2+). Lys-460 is a binding site for (6S)-5-formyl-5,6,7,8-tetrahydrofolate.

The protein belongs to the TRAFAC class TrmE-Era-EngA-EngB-Septin-like GTPase superfamily. TrmE GTPase family. As to quaternary structure, homodimer. Heterotetramer of two MnmE and two MnmG subunits. K(+) is required as a cofactor.

It localises to the cytoplasm. In terms of biological role, exhibits a very high intrinsic GTPase hydrolysis rate. Involved in the addition of a carboxymethylaminomethyl (cmnm) group at the wobble position (U34) of certain tRNAs, forming tRNA-cmnm(5)s(2)U34. This is tRNA modification GTPase MnmE from Thermoanaerobacter pseudethanolicus (strain ATCC 33223 / 39E) (Clostridium thermohydrosulfuricum).